The following is a 1521-amino-acid chain: Protein dispatched homolog 1 (1521 aa).

Polar residues predominate over residues 1-10 (MAVISGSDSV). Residues 1 to 55 (MAVISGSDSVLLSNGSISTSTSNPSPLSPSDGDLPAQHLGPRETPRTKASPNGCL) form a disordered region. Positions 11–35 (LLSNGSISTSTSNPSPLSPSDGDLP) are enriched in low complexity. 2 N-linked (GlcNAc...) asparagine glycosylation sites follow: Asn-14 and Asn-58. Residues 189 to 209 (VVVLGMCTLLIVVCALVGVLV) form a helical membrane-spanning segment. N-linked (GlcNAc...) asparagine glycosylation is present at Asn-390. In terms of domain architecture, SSD spans 485 to 657 (GIEFGIKHSL…VTWLPAVIVL (173 aa)). The next 3 helical transmembrane spans lie at 499–519 (LLMD…IMCV), 524–544 (MFIT…SYFL), and 548–568 (VFNF…LVGI). A glycan (N-linked (GlcNAc...) asparagine) is linked at Asn-581. The next 8 membrane-spanning stretches (helical) occupy residues 603–623 (AALS…ANYV), 637–657 (GTAI…VIVL), 717–737 (YLWL…VCVN), 986–1006 (MGLS…NIII), 1008–1028 (LYAI…LVLL), 1038–1058 (VTIS…GVAY), 1081–1101 (IAMA…STVL), and 1109–1129 (FMML…QCLC). Composition is skewed to polar residues over residues 1355-1364 (QENLGRTSTH) and 1418-1428 (TKSKVSGLPNQ). The disordered stretch occupies residues 1355-1440 (QENLGRTSTH…KEEKQVEPSL (86 aa)). A glycan (N-linked (GlcNAc...) asparagine) is linked at Asn-1455.

Belongs to the dispatched family. Interacts with SHH; via the cholesterol anchor of the dually lipid-modified SHH (ShhNp).

Its subcellular location is the membrane. Functionally, functions in hedgehog (Hh) signaling. Regulates the release and extracellular accumulation of cholesterol-modified hedgehog proteins and is hence required for effective production of the Hh signal. Synergizes with SCUBE2 to cause an increase in SHH secretion. This is Protein dispatched homolog 1 (Disp1) from Mus musculus (Mouse).